The following is a 212-amino-acid chain: 3-demethoxyubiquinol 3-hydroxylase (212 aa).

Residues 1–14 (MTSPSSRTPRGSTP) are compositionally biased toward low complexity. The tract at residues 1 to 22 (MTSPSSRTPRGSTPPFEPSADE) is disordered. Glu58, Glu89, His92, Glu141, Glu173, and His176 together coordinate Fe cation.

It belongs to the COQ7 family. Requires Fe cation as cofactor.

The protein resides in the cell membrane. It carries out the reaction a 5-methoxy-2-methyl-3-(all-trans-polyprenyl)benzene-1,4-diol + AH2 + O2 = a 3-demethylubiquinol + A + H2O. Its pathway is cofactor biosynthesis; ubiquinone biosynthesis. In terms of biological role, catalyzes the hydroxylation of 2-nonaprenyl-3-methyl-6-methoxy-1,4-benzoquinol during ubiquinone biosynthesis. The protein is 3-demethoxyubiquinol 3-hydroxylase of Rhodospirillum rubrum (strain ATCC 11170 / ATH 1.1.1 / DSM 467 / LMG 4362 / NCIMB 8255 / S1).